A 96-amino-acid polypeptide reads, in one-letter code: MRHYEIMVILDSSLEERTVAPSLDTYLNVIRTAGGSVEKTDVWGRRRLAYEIDKKTEGIYAVIDLQATPAAVAELDRQLRLNESVLRTKVIRPEVR.

Belongs to the bacterial ribosomal protein bS6 family.

Binds together with bS18 to 16S ribosomal RNA. In Salinispora tropica (strain ATCC BAA-916 / DSM 44818 / JCM 13857 / NBRC 105044 / CNB-440), this protein is Small ribosomal subunit protein bS6.